Consider the following 303-residue polypeptide: N-acetyl-D-glucosamine kinase (303 aa).

Residues 4-11 (GFDIGGTK) and 133-140 (GVGGGLIF) each bind ATP. Residues histidine 157, cysteine 177, cysteine 179, and cysteine 184 each coordinate Zn(2+).

Belongs to the ROK (NagC/XylR) family. NagK subfamily.

It catalyses the reaction N-acetyl-D-glucosamine + ATP = N-acetyl-D-glucosamine 6-phosphate + ADP + H(+). It participates in cell wall biogenesis; peptidoglycan recycling. Catalyzes the phosphorylation of N-acetyl-D-glucosamine (GlcNAc) derived from cell-wall degradation, yielding GlcNAc-6-P. In Escherichia fergusonii (strain ATCC 35469 / DSM 13698 / CCUG 18766 / IAM 14443 / JCM 21226 / LMG 7866 / NBRC 102419 / NCTC 12128 / CDC 0568-73), this protein is N-acetyl-D-glucosamine kinase.